A 291-amino-acid polypeptide reads, in one-letter code: 5'-3' exonuclease (291 aa).

Residues threonine 176 to lysine 269 enclose the 5'-3' exonuclease domain.

Functionally, 5'-3' exonuclease acting preferentially on double-stranded DNA. The protein is 5'-3' exonuclease (polA) of Mycoplasma pneumoniae (strain ATCC 29342 / M129 / Subtype 1) (Mycoplasmoides pneumoniae).